Consider the following 519-residue polypeptide: Cyclin-dependent kinase C-1 (519 aa).

In terms of domain architecture, Protein kinase spans 25–325 (FEKLEQIGEG…AQDALDAEYF (301 aa)). Residues 31–39 (IGEGTYGQV) and Lys54 each bind ATP. The residue at position 35 (Thr35) is a Phosphothreonine. At Tyr36 the chain carries Phosphotyrosine. Residue Asp164 is the Proton acceptor of the active site. Position 198 is a phosphothreonine (Thr198). The segment covering 336–348 (SLPKYESSHEFQT) has biased composition (basic and acidic residues). Positions 336–519 (SLPKYESSHE…RNQQQYGNWQ (184 aa)) are disordered. Residues 426-444 (GNQGGGYPNRGGQGGGGSY) are compositionally biased toward gly residues. The segment covering 445–454 (GNAPYPQQGR) has biased composition (low complexity). Gly residues-rich tracts occupy residues 464-483 (GMAGTGGPRGGVGGGYGGGS) and 490-499 (GPYGPSGPGR). Residues 505–519 (QQGGSRNQQQYGNWQ) show a composition bias toward polar residues.

This sequence belongs to the protein kinase superfamily. CMGC Ser/Thr protein kinase family. CDC2/CDKX subfamily.

It catalyses the reaction L-seryl-[protein] + ATP = O-phospho-L-seryl-[protein] + ADP + H(+). It carries out the reaction L-threonyl-[protein] + ATP = O-phospho-L-threonyl-[protein] + ADP + H(+). The enzyme catalyses [DNA-directed RNA polymerase] + ATP = phospho-[DNA-directed RNA polymerase] + ADP + H(+). In Oryza sativa subsp. japonica (Rice), this protein is Cyclin-dependent kinase C-1 (CDKC-1).